We begin with the raw amino-acid sequence, 348 residues long: Nicotinate-nucleotide pyrophosphorylase [carboxylating], chloroplastic (348 aa).

The transit peptide at 1–41 (MISVSRFLSPQFYAIPRSFVKMSASATQTAGEVSMGIKPPS) directs the protein to the chloroplast. Residues R139, 170–172 (TRK), R194, K204, E237, D264, 296–298 (SGN), and 317–319 (SGA) each bind substrate.

The protein belongs to the NadC/ModD family.

The protein localises to the plastid. Its subcellular location is the chloroplast. The catalysed reaction is nicotinate beta-D-ribonucleotide + CO2 + diphosphate = quinolinate + 5-phospho-alpha-D-ribose 1-diphosphate + 2 H(+). The protein operates within cofactor biosynthesis; NAD(+) biosynthesis; nicotinate D-ribonucleotide from quinolinate: step 1/1. Its function is as follows. Involved in the biosynthesis of NAD(+). Catalyzes the conversion of quinolate to nicotinate to nicotinate beta-D-ribonucleotide. The protein is Nicotinate-nucleotide pyrophosphorylase [carboxylating], chloroplastic of Arabidopsis thaliana (Mouse-ear cress).